A 103-amino-acid polypeptide reads, in one-letter code: Sec-independent protein translocase protein TatA (103 aa).

The helical transmembrane segment at Met1–Phe21 threads the bilayer. Residues Glu48–Lys103 form a disordered region. Residues Asp59–Leu74 show a composition bias toward polar residues.

This sequence belongs to the TatA/E family. As to quaternary structure, the Tat system comprises two distinct complexes: a TatABC complex, containing multiple copies of TatA, TatB and TatC subunits, and a separate TatA complex, containing only TatA subunits. Substrates initially bind to the TatABC complex, which probably triggers association of the separate TatA complex to form the active translocon.

The protein localises to the cell inner membrane. Part of the twin-arginine translocation (Tat) system that transports large folded proteins containing a characteristic twin-arginine motif in their signal peptide across membranes. TatA could form the protein-conducting channel of the Tat system. This Bartonella tribocorum (strain CIP 105476 / IBS 506) protein is Sec-independent protein translocase protein TatA.